Reading from the N-terminus, the 392-residue chain is O-phospho-L-seryl-tRNA:Cys-tRNA synthase (392 aa).

Residues 85–86 (AR), Asn190, and 213–215 (SGH) each bind pyridoxal 5'-phosphate. The residue at position 216 (Lys216) is an N6-(pyridoxal phosphate)lysine.

The protein belongs to the SepCysS family. Homodimer. Interacts with SepRS. It depends on pyridoxal 5'-phosphate as a cofactor.

It catalyses the reaction O-phospho-L-seryl-tRNA(Cys) + hydrogen sulfide + H(+) = L-cysteinyl-tRNA(Cys) + phosphate. In terms of biological role, converts O-phospho-L-seryl-tRNA(Cys) (Sep-tRNA(Cys)) to L-cysteinyl-tRNA(Cys) (Cys-tRNA(Cys)). The sequence is that of O-phospho-L-seryl-tRNA:Cys-tRNA synthase from Methanoculleus marisnigri (strain ATCC 35101 / DSM 1498 / JR1).